A 736-amino-acid chain; its full sequence is Phosphoribosylformylglycinamidine synthase subunit PurL (736 aa).

Residue H50 is part of the active site. Residues Y53 and K92 each contribute to the ATP site. E94 lines the Mg(2+) pocket. Substrate is bound by residues 95–98 (SHNH) and R117. H96 acts as the Proton acceptor in catalysis. D118 contributes to the Mg(2+) binding site. Substrate is bound at residue Q241. D269 is a Mg(2+) binding site. Position 313–315 (313–315 (ESQ)) interacts with substrate. ATP contacts are provided by D495 and G532. Residue N533 participates in Mg(2+) binding. S535 provides a ligand contact to substrate.

Belongs to the FGAMS family. In terms of assembly, monomer. Part of the FGAM synthase complex composed of 1 PurL, 1 PurQ and 2 PurS subunits.

The protein resides in the cytoplasm. It catalyses the reaction N(2)-formyl-N(1)-(5-phospho-beta-D-ribosyl)glycinamide + L-glutamine + ATP + H2O = 2-formamido-N(1)-(5-O-phospho-beta-D-ribosyl)acetamidine + L-glutamate + ADP + phosphate + H(+). Its pathway is purine metabolism; IMP biosynthesis via de novo pathway; 5-amino-1-(5-phospho-D-ribosyl)imidazole from N(2)-formyl-N(1)-(5-phospho-D-ribosyl)glycinamide: step 1/2. In terms of biological role, part of the phosphoribosylformylglycinamidine synthase complex involved in the purines biosynthetic pathway. Catalyzes the ATP-dependent conversion of formylglycinamide ribonucleotide (FGAR) and glutamine to yield formylglycinamidine ribonucleotide (FGAM) and glutamate. The FGAM synthase complex is composed of three subunits. PurQ produces an ammonia molecule by converting glutamine to glutamate. PurL transfers the ammonia molecule to FGAR to form FGAM in an ATP-dependent manner. PurS interacts with PurQ and PurL and is thought to assist in the transfer of the ammonia molecule from PurQ to PurL. The sequence is that of Phosphoribosylformylglycinamidine synthase subunit PurL from Bartonella quintana (strain Toulouse) (Rochalimaea quintana).